A 20-amino-acid chain; its full sequence is Styelin-A (20 aa).

As to expression, hemocytes and pharyngeal tissues.

It localises to the secreted. In terms of biological role, bactericidal against several Gram-positive and Gram-negative bacteria. The polypeptide is Styelin-A (Styela clava (Sea squirt)).